Reading from the N-terminus, the 159-residue chain is Biogenesis of lysosome-related organelles complex 1 subunit 2 (159 aa).

A disordered region spans residues 1–37 (MDKPTTSAAAAAAQDSNLLPDSPQHGPTLSSASSFEA). Residues 14-36 (QDSNLLPDSPQHGPTLSSASSFE) are compositionally biased toward polar residues. Residues 69 to 134 (EDYKLLEEMN…KLEAAAYKLD (66 aa)) adopt a coiled-coil conformation.

The protein belongs to the BLOC1S2 family. In terms of assembly, homodimer. Component of the biogenesis of lysosome-related organelles complex-1 (BLOC-1) composed of Blos1, Blos2, Blos3, Blos4, Dysb, Muted, Pldn and Snapin. Interacts with Snapin.

In terms of biological role, component of the biogenesis of lysosome-related organelles complex-1 (BLOC-1) involved in pigment granule biogenesis. This Drosophila melanogaster (Fruit fly) protein is Biogenesis of lysosome-related organelles complex 1 subunit 2.